We begin with the raw amino-acid sequence, 203 residues long: Small ribosomal subunit protein uS4 (203 aa).

In terms of domain architecture, S4 RNA-binding spans 93-156 (RRLDNVVYRL…MKVPAILEAV (64 aa)).

This sequence belongs to the universal ribosomal protein uS4 family. Part of the 30S ribosomal subunit. Contacts protein S5. The interaction surface between S4 and S5 is involved in control of translational fidelity.

Its function is as follows. One of the primary rRNA binding proteins, it binds directly to 16S rRNA where it nucleates assembly of the body of the 30S subunit. In terms of biological role, with S5 and S12 plays an important role in translational accuracy. The sequence is that of Small ribosomal subunit protein uS4 from Streptococcus agalactiae serotype Ia (strain ATCC 27591 / A909 / CDC SS700).